A 122-amino-acid polypeptide reads, in one-letter code: uncharacterized protein (122 aa).

The first 20 residues, 1–20 (MGFHFCIWIIFLLPPPCKKC), serve as a signal peptide directing secretion.

The protein resides in the secreted. This is an uncharacterized protein from Homo sapiens (Human).